Reading from the N-terminus, the 31-residue chain is Cytochrome b6-f complex subunit 6 (31 aa).

The helical transmembrane segment at 3–23 threads the bilayer; that stretch reads VFLGYIIFLAAFFGLATGLFL.

It belongs to the PetL family. In terms of assembly, the 4 large subunits of the cytochrome b6-f complex are cytochrome b6, subunit IV (17 kDa polypeptide, PetD), cytochrome f and the Rieske protein, while the 4 small subunits are PetG, PetL, PetM and PetN. The complex functions as a dimer.

The protein resides in the plastid. Its subcellular location is the chloroplast thylakoid membrane. Functionally, component of the cytochrome b6-f complex, which mediates electron transfer between photosystem II (PSII) and photosystem I (PSI), cyclic electron flow around PSI, and state transitions. PetL is important for photoautotrophic growth as well as for electron transfer efficiency and stability of the cytochrome b6-f complex. The sequence is that of Cytochrome b6-f complex subunit 6 from Pyropia yezoensis (Susabi-nori).